A 249-amino-acid chain; its full sequence is Enolase-phosphatase E1 (249 aa).

Residues Asp9 and Glu11 each contribute to the Mg(2+) site. Substrate-binding positions include 137 to 138 (SS) and Lys177. Asp204 contributes to the Mg(2+) binding site.

It belongs to the HAD-like hydrolase superfamily. MasA/MtnC family. In terms of assembly, monomer. Mg(2+) serves as cofactor.

It is found in the cytoplasm. It localises to the nucleus. The catalysed reaction is 5-methylsulfanyl-2,3-dioxopentyl phosphate + H2O = 1,2-dihydroxy-5-(methylsulfanyl)pent-1-en-3-one + phosphate. It participates in amino-acid biosynthesis; L-methionine biosynthesis via salvage pathway; L-methionine from S-methyl-5-thio-alpha-D-ribose 1-phosphate: step 3/6. Its pathway is amino-acid biosynthesis; L-methionine biosynthesis via salvage pathway; L-methionine from S-methyl-5-thio-alpha-D-ribose 1-phosphate: step 4/6. In terms of biological role, bifunctional enzyme that catalyzes the enolization of 2,3-diketo-5-methylthiopentyl-1-phosphate (DK-MTP-1-P) into the intermediate 2-hydroxy-3-keto-5-methylthiopentenyl-1-phosphate (HK-MTPenyl-1-P), which is then dephosphorylated to form the acireductone 1,2-dihydroxy-3-keto-5-methylthiopentene (DHK-MTPene). The polypeptide is Enolase-phosphatase E1 (Lodderomyces elongisporus (strain ATCC 11503 / CBS 2605 / JCM 1781 / NBRC 1676 / NRRL YB-4239) (Yeast)).